Reading from the N-terminus, the 347-residue chain is Ribosomal RNA small subunit methyltransferase C (347 aa).

The protein belongs to the methyltransferase superfamily. RsmC family. Monomer.

The protein resides in the cytoplasm. The catalysed reaction is guanosine(1207) in 16S rRNA + S-adenosyl-L-methionine = N(2)-methylguanosine(1207) in 16S rRNA + S-adenosyl-L-homocysteine + H(+). Functionally, specifically methylates the guanine in position 1207 of 16S rRNA in the 30S particle. The polypeptide is Ribosomal RNA small subunit methyltransferase C (Yersinia pseudotuberculosis serotype IB (strain PB1/+)).